Consider the following 128-residue polypeptide: Nascent polypeptide-associated complex protein (128 aa).

In terms of domain architecture, NAC-A/B spans 8–75; it reads PRMLKKMQKM…PKKIKKEKVE (68 aa).

Belongs to the NAC-alpha family. In terms of assembly, homodimer. Interacts with the ribosome. Binds ribosomal RNA.

Functionally, contacts the emerging nascent chain on the ribosome. The sequence is that of Nascent polypeptide-associated complex protein from Methanocaldococcus jannaschii (strain ATCC 43067 / DSM 2661 / JAL-1 / JCM 10045 / NBRC 100440) (Methanococcus jannaschii).